The primary structure comprises 745 residues: ATP-dependent zinc metalloprotease FtsH (745 aa).

Residues 1 to 11 (MNNRRNGLFRN) are Cytoplasmic-facing. The helical transmembrane segment at 12–32 (SLFYILMFLSLMGIIYFFFGG) threads the bilayer. Residues 33–131 (NSGSQTQNIR…VTAKAEESSG (99 aa)) lie on the Extracellular side of the membrane. Residues 132–152 (IWVTLLMYIAPVILMLFLFYM) traverse the membrane as a helical segment. Topologically, residues 153–745 (MMGQAGQGGG…SSQDDTNSQA (593 aa)) are cytoplasmic. Position 227-234 (227-234 (GPPGTGKT)) interacts with ATP. H449 is a Zn(2+) binding site. E450 is an active-site residue. Zn(2+)-binding residues include H453 and D525. The segment covering 630-673 (MPEKDSNEFPSEKAATFEESKRELERREAEKHAQNQSADDKQAD) has biased composition (basic and acidic residues). Positions 630-745 (MPEKDSNEFP…SSQDDTNSQA (116 aa)) are disordered. A compositionally biased stretch (low complexity) spans 690 to 704 (SESDASSEVSADSSV). Over residues 705-745 (NSTANSATESATDSDVATSATGLPNAESATPSSQDDTNSQA) the composition is skewed to polar residues.

The protein in the central section; belongs to the AAA ATPase family. In the C-terminal section; belongs to the peptidase M41 family. In terms of assembly, homohexamer. Requires Zn(2+) as cofactor.

It is found in the cell membrane. In terms of biological role, acts as a processive, ATP-dependent zinc metallopeptidase for both cytoplasmic and membrane proteins. Plays a role in the quality control of integral membrane proteins. The sequence is that of ATP-dependent zinc metalloprotease FtsH from Lactiplantibacillus plantarum (strain ATCC BAA-793 / NCIMB 8826 / WCFS1) (Lactobacillus plantarum).